We begin with the raw amino-acid sequence, 61 residues long: Large ribosomal subunit protein uL30 (61 aa).

It belongs to the universal ribosomal protein uL30 family. In terms of assembly, part of the 50S ribosomal subunit.

This chain is Large ribosomal subunit protein uL30, found in Teredinibacter turnerae (strain ATCC 39867 / T7901).